A 333-amino-acid polypeptide reads, in one-letter code: Ribosomal RNA small subunit methyltransferase C (333 aa).

The protein belongs to the methyltransferase superfamily. RsmC family. As to quaternary structure, monomer.

The protein resides in the cytoplasm. It catalyses the reaction guanosine(1207) in 16S rRNA + S-adenosyl-L-methionine = N(2)-methylguanosine(1207) in 16S rRNA + S-adenosyl-L-homocysteine + H(+). In terms of biological role, specifically methylates the guanine in position 1207 of 16S rRNA in the 30S particle. In Mannheimia succiniciproducens (strain KCTC 0769BP / MBEL55E), this protein is Ribosomal RNA small subunit methyltransferase C.